The sequence spans 85 residues: Large ribosomal subunit protein bL27 (85 aa).

Positions 1 to 22 (MAHKKAGGSTKNGRDSESKRLG) are disordered.

This sequence belongs to the bacterial ribosomal protein bL27 family.

The protein is Large ribosomal subunit protein bL27 of Alteromonas mediterranea (strain DSM 17117 / CIP 110805 / LMG 28347 / Deep ecotype).